The chain runs to 484 residues: L-carnitine dehydrogenase/betainyl-CoA thioesterase (484 aa).

Positions 1–322 (MKIAAIGGGV…ENRFYARNGK (322 aa)) are L-carnitine dehydrogenase. 7–12 (GGGVIG) serves as a coordination point for NAD(+). The interval 323 to 484 (VQADYPLRLH…RAVRLKETSA (162 aa)) is betainyl-CoA thioesterase.

In the N-terminal section; belongs to the 3-hydroxyacyl-CoA dehydrogenase family. L-carnitine dehydrogenase subfamily. The protein in the C-terminal section; belongs to the betainyl-CoA thioesterase family. Homodimer.

The protein resides in the cytoplasm. It carries out the reaction carnitine + NAD(+) = 3-dehydrocarnitine + NADH + H(+). The catalysed reaction is N,N,N-trimethylglycyl-CoA + H2O = glycine betaine + CoA + H(+). It functions in the pathway amine and polyamine metabolism; carnitine metabolism. Its function is as follows. Multifunctional enzyme that catalyzes the NAD(+)-dependent oxidation of L-carnitine to 3-dehydrocarnitine and the cleavage of betainyl-CoA (N,N,N-trimethylglycyl-CoA) into glycine betaine and coenzyme A. This is L-carnitine dehydrogenase/betainyl-CoA thioesterase from Agrobacterium fabrum (strain C58 / ATCC 33970) (Agrobacterium tumefaciens (strain C58)).